The chain runs to 662 residues: DNA ligase (662 aa).

Residues 31–35, 80–81, and glutamate 109 each bind NAD(+); these read DYEYD and SL. The active-site N6-AMP-lysine intermediate is lysine 111. NAD(+) contacts are provided by arginine 132, glutamate 166, lysine 282, and lysine 306. Positions 400, 403, 418, and 423 each coordinate Zn(2+). Residues 581-662 form the BRCT domain; the sequence is KVSNIFEGKT…FEEMLKGENI (82 aa).

The protein belongs to the NAD-dependent DNA ligase family. LigA subfamily. It depends on Mg(2+) as a cofactor. The cofactor is Mn(2+).

The catalysed reaction is NAD(+) + (deoxyribonucleotide)n-3'-hydroxyl + 5'-phospho-(deoxyribonucleotide)m = (deoxyribonucleotide)n+m + AMP + beta-nicotinamide D-nucleotide.. In terms of biological role, DNA ligase that catalyzes the formation of phosphodiester linkages between 5'-phosphoryl and 3'-hydroxyl groups in double-stranded DNA using NAD as a coenzyme and as the energy source for the reaction. It is essential for DNA replication and repair of damaged DNA. The sequence is that of DNA ligase from Thermoanaerobacter sp. (strain X514).